The chain runs to 472 residues: UDP-N-acetylmuramate--L-alanine ligase (472 aa).

122 to 128 (GTHGKTT) serves as a coordination point for ATP.

The protein belongs to the MurCDEF family.

The protein resides in the cytoplasm. The enzyme catalyses UDP-N-acetyl-alpha-D-muramate + L-alanine + ATP = UDP-N-acetyl-alpha-D-muramoyl-L-alanine + ADP + phosphate + H(+). The protein operates within cell wall biogenesis; peptidoglycan biosynthesis. Cell wall formation. The polypeptide is UDP-N-acetylmuramate--L-alanine ligase (Thermobifida fusca (strain YX)).